A 51-amino-acid polypeptide reads, in one-letter code: Large ribosomal subunit protein bL33 (51 aa).

Belongs to the bacterial ribosomal protein bL33 family.

This Marinobacter nauticus (strain ATCC 700491 / DSM 11845 / VT8) (Marinobacter aquaeolei) protein is Large ribosomal subunit protein bL33.